An 862-amino-acid chain; its full sequence is DNA mismatch repair protein MutS (862 aa).

608–615 provides a ligand contact to ATP; that stretch reads GPNMAGKS.

The protein belongs to the DNA mismatch repair MutS family.

Functionally, this protein is involved in the repair of mismatches in DNA. It is possible that it carries out the mismatch recognition step. This protein has a weak ATPase activity. The sequence is that of DNA mismatch repair protein MutS from Borrelia garinii subsp. bavariensis (strain ATCC BAA-2496 / DSM 23469 / PBi) (Borreliella bavariensis).